Consider the following 660-residue polypeptide: Acetyl-coenzyme A synthetase (660 aa).

Residues 197 to 200 and Thr-317 contribute to the CoA site; that span reads RGGK. Residues 397 to 399, 421 to 426, Asp-512, and Arg-528 each bind ATP; these read GEP and DTFWQT. Ser-536 is a binding site for CoA. ATP is bound at residue Arg-539. Mg(2+) is bound by residues Val-550 and Val-555. The residue at position 625 (Lys-625) is an N6-acetyllysine.

This sequence belongs to the ATP-dependent AMP-binding enzyme family. The cofactor is Mg(2+). Acetylated. Deacetylation by the SIR2-homolog deacetylase activates the enzyme.

It catalyses the reaction acetate + ATP + CoA = acetyl-CoA + AMP + diphosphate. Its pathway is ketone degradation; acetoin degradation. Catalyzes the conversion of acetate into acetyl-CoA (AcCoA), an essential intermediate at the junction of anabolic and catabolic pathways. AcsA undergoes a two-step reaction. In the first half reaction, AcsA combines acetate with ATP to form acetyl-adenylate (AcAMP) intermediate. In the second half reaction, it can then transfer the acetyl group from AcAMP to the sulfhydryl group of CoA, forming the product AcCoA. Although acetate is the preferred substrate of AcsA, propionate is also used, but at a diminished rate compared with that of acetate. Fatty acids with more than three carbon atoms are usually not accepted as substrates by AcsA. The protein is Acetyl-coenzyme A synthetase of Cupriavidus necator (strain ATCC 17699 / DSM 428 / KCTC 22496 / NCIMB 10442 / H16 / Stanier 337) (Ralstonia eutropha).